Reading from the N-terminus, the 399-residue chain is Protein IQ-DOMAIN 25 (399 aa).

Positions 1-8 (MRKNLTKL) match the Nuclear localization signal motif. Calmodulin-binding stretches follow at residues 81–91 (KERRTHAIAVA) and 99–110 (DAAVAAAKAAAA). IQ domains lie at 130–158 (EHRAAMQIQCAFRGYLARKALRALRGVVK) and 159–181 (IQALVRGFLVRNQAAATLRSMEA). Disordered regions lie at residues 198–219 (NGNAAPARKSTERFSGSLENRN), 262–302 (SPLS…SPAR), and 346–377 (LRSHSAPRQRPESNASAGGWRRSIGGGGVRMQ). Residues 285–294 (KFPTAQSTPR) are compositionally biased toward polar residues.

The protein belongs to the IQD family. Binds to multiple calmodulin (CaM) in the presence of Ca(2+) and CaM-like proteins.

It localises to the nucleus. It is found in the cell membrane. In terms of biological role, may be involved in cooperative interactions with calmodulins or calmodulin-like proteins. Recruits calmodulin proteins to microtubules, thus being a potential scaffold in cellular signaling and trafficking. May associate with nucleic acids and regulate gene expression at the transcriptional or post-transcriptional level. The protein is Protein IQ-DOMAIN 25 of Arabidopsis thaliana (Mouse-ear cress).